Here is a 1071-residue protein sequence, read N- to C-terminus: Tricorn protease (1071 aa).

Residues 39 to 310 are six-bladed beta propeller; the sequence is MPNLLLNPDI…EKIEKIEIGD (272 aa). The tract at residues 131–132 is binds the substrate's C-terminus; sequence RR. Positions 326-675 are seven-bladed beta propeller; sequence AEDFSPLDGD…EDERTVETDK (350 aa). The C-1; helical bundle stretch occupies residues 679–745; that stretch reads VSSIHEEFLQ…VEMQGEYRTS (67 aa). The Charge relay system role is filled by histidine 746. The interval 761–855 is PDZ-like; that stretch reads RSGRIACDFK…DLMIDILDDD (95 aa). Residues 856–1061 form a C-2; alpha-beta sandwich region; sequence RFIRYRSWVE…IDALIEELRN (206 aa). 916-918 contributes to the substrate binding site; sequence GGG. Serine 965 serves as the catalytic Nucleophile. 993-995 is a substrate binding site; that stretch reads GIT. Glutamate 1023 (charge relay system) is an active-site residue.

This sequence belongs to the peptidase S41B family. As to quaternary structure, part of the Tricorn proteolytic complex. Assembles to form a hexameric toroid, 20 copies of which may then assemble to form an icosahedral supermolecule of 14.6 MDa.

Its subcellular location is the cytoplasm. In terms of biological role, tricorn degrades oligopeptides (probably derived from the proteasome) and channels the products to F1, F2 and F3 proteases, which then catalyze the terminal degradation step, yielding free amino acids. The sequence is that of Tricorn protease (tri) from Thermoplasma acidophilum (strain ATCC 25905 / DSM 1728 / JCM 9062 / NBRC 15155 / AMRC-C165).